The primary structure comprises 396 residues: RNA polymerase principal sigma factor HrdA (396 aa).

Residues 1–20 are compositionally biased toward basic residues; sequence MRGGQRRASRLRPPTYRRRP. Residues 1–96 are disordered; that stretch reads MRGGQRRASR…PTRTESGGPS (96 aa). 2 stretches are compositionally biased toward low complexity: residues 33–42 and 56–75; these read QTQTLTQTDT and LLAM…PGAP. The Polymerase core binding signature appears at 187-200; that stretch reads DLVQEGNLGLIRAV. The segment at residues 357–376 is a DNA-binding region (H-T-H motif); it reads LEEIGRLFGVTRERIRQIES.

Belongs to the sigma-70 factor family. Interacts transiently with the RNA polymerase catalytic core. Interacts with RNA polymerase-binding protein RbpA.

Functionally, sigma factors are initiation factors that promote the attachment of RNA polymerase to specific initiation sites and are then released. This chain is RNA polymerase principal sigma factor HrdA (hrdA), found in Streptomyces coelicolor (strain ATCC BAA-471 / A3(2) / M145).